The following is a 315-amino-acid chain: Ribose-phosphate pyrophosphokinase (315 aa).

ATP-binding positions include 41–43 (DGE) and 100–101 (RQ). Positions 134 and 173 each coordinate Mg(2+). K196 is an active-site residue. Residues R198, D222, and 226–230 (DTAGT) each bind D-ribose 5-phosphate.

It belongs to the ribose-phosphate pyrophosphokinase family. Class I subfamily. In terms of assembly, homohexamer. The cofactor is Mg(2+).

The protein resides in the cytoplasm. It carries out the reaction D-ribose 5-phosphate + ATP = 5-phospho-alpha-D-ribose 1-diphosphate + AMP + H(+). It functions in the pathway metabolic intermediate biosynthesis; 5-phospho-alpha-D-ribose 1-diphosphate biosynthesis; 5-phospho-alpha-D-ribose 1-diphosphate from D-ribose 5-phosphate (route I): step 1/1. Involved in the biosynthesis of the central metabolite phospho-alpha-D-ribosyl-1-pyrophosphate (PRPP) via the transfer of pyrophosphoryl group from ATP to 1-hydroxyl of ribose-5-phosphate (Rib-5-P). This is Ribose-phosphate pyrophosphokinase from Bacillus caldolyticus.